The primary structure comprises 725 residues: Ribonuclease Y (725 aa).

Residues 4-24 (VLVILLSLVLLVLVALILAVA) form a helical membrane-spanning segment. 3 disordered regions span residues 62–140 (DGPA…ASDT), 165–195 (VAAT…SVRR), and 300–321 (EQRV…AGRE). 2 stretches are compositionally biased toward low complexity: residues 84 to 100 (DAPG…PDAG) and 114 to 137 (AAAP…PADA). The KH domain occupies 415–481 (VVTVLHLPGD…RITLAALVSD (67 aa)). Residues 541–634 (VLAHLIESAH…TQAADQISGG (94 aa)) form the HD domain.

This sequence belongs to the RNase Y family.

The protein localises to the cell membrane. In terms of biological role, endoribonuclease that initiates mRNA decay. In Frankia alni (strain DSM 45986 / CECT 9034 / ACN14a), this protein is Ribonuclease Y.